A 494-amino-acid chain; its full sequence is Transcription termination factor MTERF4, chloroplastic (494 aa).

A chloroplast-targeting transit peptide spans 1–54 (MMKSLLFSAHPTSLLLPAPRLRRLLRLRAASSASASAPPRADRRSPGTPSRRPS). 2 disordered regions span residues 32–61 (SASA…YARP) and 457–494 (VEEM…EFVR). A compositionally biased stretch (low complexity) spans 46–56 (PGTPSRRPSSS). Acidic residues-rich tracts occupy residues 457–466 (VEEMEREDSS) and 473–494 (DEVE…EFVR).

It belongs to the mTERF family.

Its subcellular location is the plastid. The protein resides in the chloroplast stroma. Its function is as follows. Transcription termination factor required for processing and steady-state levels of plastid transcripts. Required for splicing of the chloroplastic group II intron. Required for the accumulation of 16S and 23S ribosomes. The sequence is that of Transcription termination factor MTERF4, chloroplastic from Zea mays (Maize).